The sequence spans 298 residues: Lipoyl synthase (298 aa).

The [4Fe-4S] cluster site is built by cysteine 40, cysteine 45, cysteine 51, cysteine 67, cysteine 71, cysteine 74, and serine 280. In terms of domain architecture, Radical SAM core spans 53–269 (AVRRTATFMI…KEIALSKGFS (217 aa)).

Belongs to the radical SAM superfamily. Lipoyl synthase family. The cofactor is [4Fe-4S] cluster.

The protein localises to the cytoplasm. The enzyme catalyses [[Fe-S] cluster scaffold protein carrying a second [4Fe-4S](2+) cluster] + N(6)-octanoyl-L-lysyl-[protein] + 2 oxidized [2Fe-2S]-[ferredoxin] + 2 S-adenosyl-L-methionine + 4 H(+) = [[Fe-S] cluster scaffold protein] + N(6)-[(R)-dihydrolipoyl]-L-lysyl-[protein] + 4 Fe(3+) + 2 hydrogen sulfide + 2 5'-deoxyadenosine + 2 L-methionine + 2 reduced [2Fe-2S]-[ferredoxin]. The protein operates within protein modification; protein lipoylation via endogenous pathway; protein N(6)-(lipoyl)lysine from octanoyl-[acyl-carrier-protein]. In terms of biological role, catalyzes the radical-mediated insertion of two sulfur atoms into the C-6 and C-8 positions of the octanoyl moiety bound to the lipoyl domains of lipoate-dependent enzymes, thereby converting the octanoylated domains into lipoylated derivatives. The sequence is that of Lipoyl synthase from Geobacillus thermodenitrificans (strain NG80-2).